We begin with the raw amino-acid sequence, 190 residues long: dCTP deaminase (190 aa).

113-118 contributes to the dCTP binding site; that stretch reads KSTYAR. The active-site Proton donor/acceptor is the glutamate 139. DCTP-binding residues include glutamine 158, tyrosine 172, lysine 181, and glutamine 182.

Belongs to the dCTP deaminase family. In terms of assembly, homotrimer.

It carries out the reaction dCTP + H2O + H(+) = dUTP + NH4(+). It functions in the pathway pyrimidine metabolism; dUMP biosynthesis; dUMP from dCTP (dUTP route): step 1/2. Its function is as follows. Catalyzes the deamination of dCTP to dUTP. The sequence is that of dCTP deaminase from Chlamydia felis (strain Fe/C-56) (Chlamydophila felis).